The following is a 236-amino-acid chain: Protein YIPF6 (236 aa).

Ala-2 carries the N-acetylalanine modification. The Cytoplasmic segment spans residues 2–84; the sequence is AEAEESPGDP…HVLYPRKSNT (83 aa). Position 7 is a phosphoserine (Ser-7). Residues 85–105 form a helical membrane-spanning segment; sequence LLRDWDLWGPLILCVTLALML. The Lumenal portion of the chain corresponds to 106–115; it reads QRDSADSEKD. The chain crosses the membrane as a helical span at residues 116–136; the sequence is GGPQFAEVFVIVWFGAVTITL. Residues 137-146 lie on the Cytoplasmic side of the membrane; sequence NSKLLGGNIS. A helical transmembrane segment spans residues 147–167; the sequence is FFQSLCVLGYCILPLTVAMLI. Residues 168 to 184 lie on the Lumenal side of the membrane; that stretch reads CRLVLLADPGPVNFMVR. A helical transmembrane segment spans residues 185–205; that stretch reads LFVVIVMFAWSIVASTAFLAD. Residues 206–212 are Cytoplasmic-facing; that stretch reads SQPPNRR. The helical transmembrane segment at 213 to 233 threads the bilayer; sequence ALAVYPVFLFYFVISWMILTF. The Lumenal segment spans residues 234 to 236; that stretch reads TPQ.

Belongs to the YIP1 family. In terms of assembly, predominantly interacts with YIPF1 or YIPF2, but may also form a ternary complex with YIPF1 and YIPF2. This interaction may stabilize YIPF1 and YIPF2.

It is found in the golgi apparatus membrane. In terms of biological role, may be required for stable YIPF1 and YIPF2 protein expression. This is Protein YIPF6 (YIPF6) from Homo sapiens (Human).